The sequence spans 600 residues: Adenine deaminase 3 (600 aa).

Belongs to the metallo-dependent hydrolases superfamily. Adenine deaminase family. It depends on Mn(2+) as a cofactor.

It carries out the reaction adenine + H2O + H(+) = hypoxanthine + NH4(+). The protein is Adenine deaminase 3 of Rhizobium johnstonii (strain DSM 114642 / LMG 32736 / 3841) (Rhizobium leguminosarum bv. viciae).